A 184-amino-acid polypeptide reads, in one-letter code: MQGTSKDNGGRHPLYRGVRQRKNSNKWVSEIREPRKPNRIWLGTFSTPEMAAIAYDVAALALKGSQAELNFPNSVSSLPAPTSMSPADIQAAAASAAAAFGAARDAIVMANNNSQTSGVACMNSSYDNTNMNGFMDEDLVFDMPNVLMNMAEGMLLSPPRPTVFDAAYDADGFPGGDDYLWNFP.

Residues 1-21 form a disordered region; sequence MQGTSKDNGGRHPLYRGVRQR. The segment at residues 14–72 is a DNA-binding region (AP2/ERF); it reads LYRGVRQRKNSNKWVSEIREPRKPNRIWLGTFSTPEMAAIAYDVAALALKGSQAELNFP.

The protein belongs to the AP2/ERF transcription factor family. ERF subfamily.

The protein localises to the nucleus. Probably acts as a transcriptional activator. Binds to the GCC-box pathogenesis-related promoter element. May be involved in the regulation of gene expression by stress factors and by components of stress signal transduction pathways. This Arabidopsis thaliana (Mouse-ear cress) protein is Ethylene-responsive transcription factor ERF024 (ERF024).